We begin with the raw amino-acid sequence, 188 residues long: Elongation factor P (188 aa).

The protein belongs to the elongation factor P family.

The protein resides in the cytoplasm. It functions in the pathway protein biosynthesis; polypeptide chain elongation. Functionally, involved in peptide bond synthesis. Stimulates efficient translation and peptide-bond synthesis on native or reconstituted 70S ribosomes in vitro. Probably functions indirectly by altering the affinity of the ribosome for aminoacyl-tRNA, thus increasing their reactivity as acceptors for peptidyl transferase. The chain is Elongation factor P from Sulfurimonas denitrificans (strain ATCC 33889 / DSM 1251) (Thiomicrospira denitrificans (strain ATCC 33889 / DSM 1251)).